Here is a 161-residue protein sequence, read N- to C-terminus: DNA-directed RNA polymerase 18 kDa subunit (161 aa).

Belongs to the poxviridae DNA-directed RNA polymerase 18 kDa subunit family. In terms of assembly, the DNA-dependent RNA polymerase used for intermediate and late genes expression consists of eight subunits Rpo30/OPG66, Rpo7/OPG90, Rpo22/OPG103, Rpo147/OPG105, Rpo18/OPG119, Rpo19/OPG131, Rpo132/OPG151 and Rpo35/OPG156. The same holoenzyme, with the addition of the transcription-specificity factor OPG109, is used for early gene expression.

It localises to the virion. The catalysed reaction is RNA(n) + a ribonucleoside 5'-triphosphate = RNA(n+1) + diphosphate. Functionally, part of the DNA-dependent RNA polymerase which catalyzes the transcription of viral DNA into RNA using the four ribonucleoside triphosphates as substrates. Responsible for the transcription of early, intermediate and late genes. DNA-dependent RNA polymerase associates with the early transcription factor (ETF), itself composed of OPG118 and OPG133, thereby allowing the early genes transcription. Late transcription, and probably also intermediate transcription, require newly synthesized RNA polymerase. In Homo sapiens (Human), this protein is DNA-directed RNA polymerase 18 kDa subunit (OPG119).